A 526-amino-acid chain; its full sequence is Cytochrome P450 monooxygenase 253 (526 aa).

Helical transmembrane passes span 13–33, 115–135, and 306–326; these read IASSTIGQRILLALALGLLLI, FIMAGEILTGGMLIVFTGYGK, and IGAGAETTAASLSVFMLAMTL. Cysteine 451 contributes to the heme binding site.

Belongs to the cytochrome P450 family. The cofactor is heme.

The protein resides in the membrane. Its pathway is secondary metabolite biosynthesis. Cytochrome P450 monooxygenase that is able to use delta(6)-protoilludene as a substrate to produce delta(6)-protoilludene-8-ol. In Postia placenta (strain ATCC 44394 / Madison 698-R) (Brown rot fungus), this protein is Cytochrome P450 monooxygenase 253.